The primary structure comprises 1078 residues: A type blood alpha-D-galactosamine galactosaminidase (1078 aa).

The N-terminal stretch at 1–26 (MRGKKFISLTLSTMLCLQLLPTASFA) is a signal peptide. The glycoside hydrolase 36 domain stretch occupies residues 306-570 (PDSSYDLRWE…NNIWYPSAVG (265 aa)). D463 (nucleophile) is an active-site residue. The active site involves D532. The interval 699–1078 (PDPEPVDPDY…LDYLTYTTNA (380 aa)) is not required for activity on soluble substrates.

Belongs to the glycosyl hydrolase 36 family.

The enzyme catalyses an alpha-D-galactosaminyl-(1-&gt;3)-[alpha-L-fucosyl-(1-&gt;2)]-beta-D-galactosyl derivative + H2O = D-galactosamine + an alpha-L-fucosyl-(1-&gt;2)-beta-D-galactosyl derivative. In terms of biological role, one of an enzyme pair that work together to convert the A antigen to the H antigen of the O blood type, which together release galactosamine. Catalyzes the second step in the conversion, acts on the product of the first reaction (FpGalNAcDeAc, AC P0DTR4). Is specific for galactosamine containing sugars, does not cleave GalNAc residues. In Flavonifractor plautii (Fusobacterium plautii), this protein is A type blood alpha-D-galactosamine galactosaminidase.